Reading from the N-terminus, the 242-residue chain is Beta-glucanase (242 aa).

The N-terminal stretch at 1–28 is a signal peptide; sequence MPYLKRVLLLLVTGLFMSLFAVTATASA. Gln29 carries the post-translational modification Pyrrolidone carboxylic acid. In terms of domain architecture, GH16 spans 29–242; that stretch reads QTGGSFFDPF…HYDWVRYTKK (214 aa). An intrachain disulfide couples Cys60 to Cys89. Glu133 serves as the catalytic Nucleophile. Glu137 serves as the catalytic Proton donor.

Belongs to the glycosyl hydrolase 16 family.

Its subcellular location is the secreted. The catalysed reaction is Hydrolysis of (1-&gt;4)-beta-D-glucosidic linkages in beta-D-glucans containing (1-&gt;3)- and (1-&gt;4)-bonds.. This is Beta-glucanase (bglS) from Bacillus subtilis (strain 168).